Consider the following 624-residue polypeptide: DNA mismatch repair protein MutL (624 aa).

Residues 336-357 are disordered; it reads GEGFHETSDSFSSRSSQHSDAR. The span at 344–353 shows a compositional bias: low complexity; that stretch reads DSFSSRSSQH.

Belongs to the DNA mismatch repair MutL/HexB family.

In terms of biological role, this protein is involved in the repair of mismatches in DNA. It is required for dam-dependent methyl-directed DNA mismatch repair. May act as a 'molecular matchmaker', a protein that promotes the formation of a stable complex between two or more DNA-binding proteins in an ATP-dependent manner without itself being part of a final effector complex. This is DNA mismatch repair protein MutL from Chlorobium phaeobacteroides (strain BS1).